Here is a 415-residue protein sequence, read N- to C-terminus: Dynein assembly factor with WD repeat domains 1 (415 aa).

8 WD repeats span residues 90–129 (AHIL…ELHT), 132–174 (GHRN…HTFR), 175–214 (GHTA…EALT), 217–256 (GHAA…RIHT), 259–298 (GHRG…CVAT), 301–340 (GHDD…CLAK), 343–384 (GHEG…QVLK), and 386–415 (HTDE…RIWR).

Belongs to the WD repeat WDR69 family.

Its subcellular location is the cytoplasm. The protein resides in the cytoskeleton. It localises to the flagellum basal body. It is found in the flagellum axoneme. Its function is as follows. Required for axonemal dynein assembly and ciliary motility in ciliated organs, including Kupffer's vesicle, during embryogenesis. Facilitates the onset of robust cilia motility during development. This Xenopus laevis (African clawed frog) protein is Dynein assembly factor with WD repeat domains 1 (daw1).